Consider the following 345-residue polypeptide: D-apiose dehydrogenase (345 aa).

Residue 15-16 (FF) coordinates NAD(+). Mg(2+) contacts are provided by Trp-24, Lys-25, Val-27, and Ala-30. Residues Asp-37, Ser-79, 97–98 (QK), Asn-126, and 165–167 (QPY) each bind NAD(+). Lys-98 lines the substrate pocket. The substrate site is built by Gln-165, Asp-178, His-182, and Tyr-232.

It belongs to the Gfo/Idh/MocA family.

The enzyme catalyses D-apiofuranose + NAD(+) = D-apionolactone + NADH + H(+). It participates in carbohydrate metabolism. Its function is as follows. Involved in catabolism of D-apiose. Catalyzes oxidation of D-apiose to D-apionolactone. The polypeptide is D-apiose dehydrogenase (Rhizobium rhizogenes (strain K84 / ATCC BAA-868) (Agrobacterium radiobacter)).